The primary structure comprises 394 residues: 1-deoxy-D-xylulose 5-phosphate reductoisomerase (394 aa).

Positions 28, 29, 30, 31, 57, and 133 each coordinate NADPH. Residue K134 coordinates 1-deoxy-D-xylulose 5-phosphate. E135 is a binding site for NADPH. D157 is a Mn(2+) binding site. S158, E159, S183, and H206 together coordinate 1-deoxy-D-xylulose 5-phosphate. E159 serves as a coordination point for Mn(2+). G212 contributes to the NADPH binding site. S219, N224, K225, and E228 together coordinate 1-deoxy-D-xylulose 5-phosphate. E228 lines the Mn(2+) pocket.

The protein belongs to the DXR family. The cofactor is Mg(2+). Mn(2+) serves as cofactor.

It carries out the reaction 2-C-methyl-D-erythritol 4-phosphate + NADP(+) = 1-deoxy-D-xylulose 5-phosphate + NADPH + H(+). It functions in the pathway isoprenoid biosynthesis; isopentenyl diphosphate biosynthesis via DXP pathway; isopentenyl diphosphate from 1-deoxy-D-xylulose 5-phosphate: step 1/6. In terms of biological role, catalyzes the NADPH-dependent rearrangement and reduction of 1-deoxy-D-xylulose-5-phosphate (DXP) to 2-C-methyl-D-erythritol 4-phosphate (MEP). The protein is 1-deoxy-D-xylulose 5-phosphate reductoisomerase of Nocardia farcinica (strain IFM 10152).